Consider the following 308-residue polypeptide: MKPKIFIDGEHGTTGLQIRALLAERGDLEIISIPTERRKETAARAEFLNAADIAILCLPDDAAKESVSLITNDTTKVIDASTAHRVAEGWAYGFAEMDKEQAKAIATAKRVANPGCWPQGPIATLRPLVTSGLLPADFPITVNGISGYSGGGRPMIEDYVAKGEDASEFLPYGLTLQHKHVPELRAYAKLSHDPIMQPAVGNFAQGMITVVPLQLGGLDSVPTGAELHAAIADHFAAIKGGVVEVAPYAHLERMPEIDPEIYNGTNRMKVYVFANDKRAQALLLAVYDNLGKGASGAAVQNMDLMLGL.

Residue Cys116 is part of the active site.

The protein belongs to the NAGSA dehydrogenase family. Type 2 subfamily.

The protein resides in the cytoplasm. The catalysed reaction is N-acetyl-L-glutamate 5-semialdehyde + phosphate + NADP(+) = N-acetyl-L-glutamyl 5-phosphate + NADPH + H(+). It functions in the pathway amino-acid biosynthesis; L-arginine biosynthesis; N(2)-acetyl-L-ornithine from L-glutamate: step 3/4. Functionally, catalyzes the NADPH-dependent reduction of N-acetyl-5-glutamyl phosphate to yield N-acetyl-L-glutamate 5-semialdehyde. The polypeptide is N-acetyl-gamma-glutamyl-phosphate reductase (Mesorhizobium japonicum (strain LMG 29417 / CECT 9101 / MAFF 303099) (Mesorhizobium loti (strain MAFF 303099))).